Consider the following 317-residue polypeptide: Transaldolase (317 aa).

The Schiff-base intermediate with substrate role is filled by Lys126.

This sequence belongs to the transaldolase family. Type 1 subfamily. As to quaternary structure, homodimer.

The protein localises to the cytoplasm. The catalysed reaction is D-sedoheptulose 7-phosphate + D-glyceraldehyde 3-phosphate = D-erythrose 4-phosphate + beta-D-fructose 6-phosphate. Its pathway is carbohydrate degradation; pentose phosphate pathway; D-glyceraldehyde 3-phosphate and beta-D-fructose 6-phosphate from D-ribose 5-phosphate and D-xylulose 5-phosphate (non-oxidative stage): step 2/3. Functionally, transaldolase is important for the balance of metabolites in the pentose-phosphate pathway. The chain is Transaldolase from Burkholderia ambifaria (strain ATCC BAA-244 / DSM 16087 / CCUG 44356 / LMG 19182 / AMMD) (Burkholderia cepacia (strain AMMD)).